The sequence spans 101 residues: Urease subunit beta (101 aa).

Belongs to the urease beta subunit family. As to quaternary structure, heterotrimer of UreA (gamma), UreB (beta) and UreC (alpha) subunits. Three heterotrimers associate to form the active enzyme.

The protein resides in the cytoplasm. The enzyme catalyses urea + 2 H2O + H(+) = hydrogencarbonate + 2 NH4(+). Its pathway is nitrogen metabolism; urea degradation; CO(2) and NH(3) from urea (urease route): step 1/1. The protein is Urease subunit beta of Burkholderia ambifaria (strain MC40-6).